A 270-amino-acid chain; its full sequence is Aliphatic sulfonates import ATP-binding protein SsuB 3 (270 aa).

In terms of domain architecture, ABC transporter spans 17–238; sequence LAVRKLKKAF…VRGSHRLAAL (222 aa). 49 to 56 contacts ATP; that stretch reads GRSGCGKS.

Belongs to the ABC transporter superfamily. Aliphatic sulfonates importer (TC 3.A.1.17.2) family. The complex is composed of two ATP-binding proteins (SsuB), two transmembrane proteins (SsuC) and a solute-binding protein (SsuA).

It localises to the cell inner membrane. It catalyses the reaction ATP + H2O + aliphatic sulfonate-[sulfonate-binding protein]Side 1 = ADP + phosphate + aliphatic sulfonateSide 2 + [sulfonate-binding protein]Side 1.. Functionally, part of the ABC transporter complex SsuABC involved in aliphatic sulfonates import. Responsible for energy coupling to the transport system. This chain is Aliphatic sulfonates import ATP-binding protein SsuB 3, found in Pseudomonas syringae pv. syringae (strain B728a).